Here is a 286-residue protein sequence, read N- to C-terminus: tRNA(Ile)-lysidine synthase (286 aa).

Serine 7 to serine 12 provides a ligand contact to ATP.

Belongs to the tRNA(Ile)-lysidine synthase family.

Its subcellular location is the cytoplasm. It catalyses the reaction cytidine(34) in tRNA(Ile2) + L-lysine + ATP = lysidine(34) in tRNA(Ile2) + AMP + diphosphate + H(+). Ligates lysine onto the cytidine present at position 34 of the AUA codon-specific tRNA(Ile) that contains the anticodon CAU, in an ATP-dependent manner. Cytidine is converted to lysidine, thus changing the amino acid specificity of the tRNA from methionine to isoleucine. This is tRNA(Ile)-lysidine synthase from Mycoplasmopsis pulmonis (strain UAB CTIP) (Mycoplasma pulmonis).